Consider the following 1775-residue polypeptide: Protein TIC 214 (1775 aa).

6 helical membrane passes run 19–39 (IINS…FSIG), 68–88 (FIAG…HLAL), 91–111 (PHTI…WNNH), 133–153 (VFLN…SSML), 176–196 (VGWL…LVWI), and 227–247 (IFSI…PSPI). Positions 1491–1512 (KESAGQGERESDNEKKKNLESA) are disordered.

The protein belongs to the TIC214 family. In terms of assembly, part of the Tic complex.

Its subcellular location is the plastid. It is found in the chloroplast inner membrane. Functionally, involved in protein precursor import into chloroplasts. May be part of an intermediate translocation complex acting as a protein-conducting channel at the inner envelope. The sequence is that of Protein TIC 214 from Lobularia maritima (Sweet alyssum).